We begin with the raw amino-acid sequence, 272 residues long: Tail completion protein gp15 (272 aa).

The disordered stretch occupies residues 240–272 (RDIDPEDWDGTVKQTFTSNVNRPTPPEPPGPRT). Residues 251 to 260 (VKQTFTSNVN) are compositionally biased toward polar residues. The span at 262 to 272 (PTPPEPPGPRT) shows a compositional bias: pro residues.

As to quaternary structure, hexamer. Interacts with gp3 and gp18 on the bottom part of the hexamer. Interacts with gp13 and gp14 on the top part of the hexamer.

The protein localises to the virion. Its function is as follows. Stabilizes the tail sheath structure and acts as a connector between the end of tail and the portal vertex of the capsid. The sequence is that of Tail completion protein gp15 (15) from Enterobacteria phage T4 (Bacteriophage T4).